The chain runs to 238 residues: Ubiquinone biosynthesis O-methyltransferase (238 aa).

S-adenosyl-L-methionine is bound by residues Arg-36, Gly-56, Asp-77, and Met-125.

The protein belongs to the methyltransferase superfamily. UbiG/COQ3 family.

The catalysed reaction is a 3-demethylubiquinol + S-adenosyl-L-methionine = a ubiquinol + S-adenosyl-L-homocysteine + H(+). It catalyses the reaction a 3-(all-trans-polyprenyl)benzene-1,2-diol + S-adenosyl-L-methionine = a 2-methoxy-6-(all-trans-polyprenyl)phenol + S-adenosyl-L-homocysteine + H(+). It participates in cofactor biosynthesis; ubiquinone biosynthesis. Functionally, O-methyltransferase that catalyzes the 2 O-methylation steps in the ubiquinone biosynthetic pathway. The sequence is that of Ubiquinone biosynthesis O-methyltransferase from Histophilus somni (strain 2336) (Haemophilus somnus).